Consider the following 397-residue polypeptide: 2-aminoadipate transaminase (397 aa).

Residue Gly40 coordinates substrate. Pyridoxal 5'-phosphate is bound by residues Tyr70, 100 to 101 (SQ), Asn174, 202 to 205 (DDAY), 235 to 237 (SFS), and Arg245. Asn174 contacts substrate. Lys263 is subject to N6-(pyridoxal phosphate)lysine. Residue Arg368 participates in substrate binding.

This sequence belongs to the class-I pyridoxal-phosphate-dependent aminotransferase family. As to quaternary structure, homodimer. Pyridoxal 5'-phosphate serves as cofactor.

It catalyses the reaction L-2-aminoadipate + 2-oxoglutarate = 2-oxoadipate + L-glutamate. It functions in the pathway amino-acid biosynthesis; L-lysine biosynthesis via AAA pathway; L-alpha-aminoadipate from 2-oxoglutarate: step 5/5. Its function is as follows. Catalyzes the transfer of an amino group between 2-oxoadipate (2-OA) and glutamate (Glu) to yield alpha-aminodipate (AAA). It can also transaminate glutamate, leucine, and aromatic amino acids. It also contributes in the biosynthesis of other amino acids such as leucine. The chain is 2-aminoadipate transaminase (lysN) from Thermus thermophilus (strain ATCC BAA-163 / DSM 7039 / HB27).